A 279-amino-acid polypeptide reads, in one-letter code: NADPH-dependent 7-cyano-7-deazaguanine reductase (279 aa).

Residue 86-88 participates in substrate binding; the sequence is IES. Residue 88–89 participates in NADPH binding; it reads SK. Cysteine 186 acts as the Thioimide intermediate in catalysis. Aspartate 193 (proton donor) is an active-site residue. 225–226 is a binding site for substrate; the sequence is HE. Residue 254–255 coordinates NADPH; sequence RG.

Belongs to the GTP cyclohydrolase I family. QueF type 2 subfamily. Homodimer.

It is found in the cytoplasm. The catalysed reaction is 7-aminomethyl-7-carbaguanine + 2 NADP(+) = 7-cyano-7-deazaguanine + 2 NADPH + 3 H(+). It functions in the pathway tRNA modification; tRNA-queuosine biosynthesis. In terms of biological role, catalyzes the NADPH-dependent reduction of 7-cyano-7-deazaguanine (preQ0) to 7-aminomethyl-7-deazaguanine (preQ1). The protein is NADPH-dependent 7-cyano-7-deazaguanine reductase of Chromobacterium violaceum (strain ATCC 12472 / DSM 30191 / JCM 1249 / CCUG 213 / NBRC 12614 / NCIMB 9131 / NCTC 9757 / MK).